The sequence spans 142 residues: Universal stress protein D (142 aa).

It belongs to the universal stress protein A family.

It localises to the cytoplasm. Required for resistance to DNA-damaging agents. This Escherichia coli O157:H7 protein is Universal stress protein D (uspD).